The sequence spans 343 residues: Ribosomal RNA small subunit methyltransferase H (343 aa).

Residues 39–41 (AGH), D58, F87, D108, and Q115 contribute to the S-adenosyl-L-methionine site.

This sequence belongs to the methyltransferase superfamily. RsmH family.

Its subcellular location is the cytoplasm. It carries out the reaction cytidine(1402) in 16S rRNA + S-adenosyl-L-methionine = N(4)-methylcytidine(1402) in 16S rRNA + S-adenosyl-L-homocysteine + H(+). In terms of biological role, specifically methylates the N4 position of cytidine in position 1402 (C1402) of 16S rRNA. The sequence is that of Ribosomal RNA small subunit methyltransferase H from Bifidobacterium adolescentis (strain ATCC 15703 / DSM 20083 / NCTC 11814 / E194a).